A 457-amino-acid polypeptide reads, in one-letter code: Subtilisin-like serine protease Pen c 2 (457 aa).

An N-terminal signal peptide occupies residues 1 to 16 (MKGFLGLALLPLLTAA). Positions 17 to 136 (SPVSVESIHN…IEKDSEVHHF (120 aa)) are cleaved as a propeptide — removed in mature form. The region spanning 43 to 134 (SYIVVFKKHV…DYIEKDSEVH (92 aa)) is the Inhibitor I9 domain. A Peptidase S8 domain is found at 146–457 (PWGLARISHR…YTDIVAQGGY (312 aa)). Active-site charge relay system residues include D182 and H214. N-linked (GlcNAc...) asparagine glycans are attached at residues N244 and N284. Catalysis depends on S380, which acts as the Charge relay system. N447 carries N-linked (GlcNAc...) asparagine glycosylation.

The protein belongs to the peptidase S8 family.

Serine protease. The chain is Subtilisin-like serine protease Pen c 2 from Penicillium citrinum.